Here is a 98-residue protein sequence, read N- to C-terminus: Large ribosomal subunit protein uL23 (98 aa).

It belongs to the universal ribosomal protein uL23 family. Part of the 50S ribosomal subunit. Contacts protein L29, and trigger factor when it is bound to the ribosome.

In terms of biological role, one of the early assembly proteins it binds 23S rRNA. One of the proteins that surrounds the polypeptide exit tunnel on the outside of the ribosome. Forms the main docking site for trigger factor binding to the ribosome. The protein is Large ribosomal subunit protein uL23 of Cereibacter sphaeroides (strain ATCC 17025 / ATH 2.4.3) (Rhodobacter sphaeroides).